Consider the following 689-residue polypeptide: Glycine--tRNA ligase beta subunit (689 aa).

This sequence belongs to the class-II aminoacyl-tRNA synthetase family. As to quaternary structure, tetramer of two alpha and two beta subunits.

The protein resides in the cytoplasm. The enzyme catalyses tRNA(Gly) + glycine + ATP = glycyl-tRNA(Gly) + AMP + diphosphate. This Pasteurella multocida (strain Pm70) protein is Glycine--tRNA ligase beta subunit (glyS).